The chain runs to 160 residues: Ribosomal RNA large subunit methyltransferase H (160 aa).

S-adenosyl-L-methionine-binding residues include leucine 76 and glycine 108.

This sequence belongs to the RNA methyltransferase RlmH family. In terms of assembly, homodimer.

Its subcellular location is the cytoplasm. It carries out the reaction pseudouridine(1915) in 23S rRNA + S-adenosyl-L-methionine = N(3)-methylpseudouridine(1915) in 23S rRNA + S-adenosyl-L-homocysteine + H(+). Its function is as follows. Specifically methylates the pseudouridine at position 1915 (m3Psi1915) in 23S rRNA. In Afipia carboxidovorans (strain ATCC 49405 / DSM 1227 / KCTC 32145 / OM5) (Oligotropha carboxidovorans), this protein is Ribosomal RNA large subunit methyltransferase H.